Consider the following 166-residue polypeptide: Interferon gamma (166 aa).

A signal peptide spans 1 to 23 (MKYTSYILAFQLCIVLGSLGCYC). A Pyrrolidone carboxylic acid modification is found at glutamine 24. N-linked (GlcNAc...) asparagine glycosylation is found at asparagine 48, asparagine 86, and asparagine 120.

The protein belongs to the type II (or gamma) interferon family. Homodimer. Interacts with IFNGR1 (via extracellular domain); this interaction promotes IFNGR1 dimerization. In terms of tissue distribution, released primarily from activated T lymphocytes.

It localises to the secreted. Its function is as follows. Type II interferon produced by immune cells such as T-cells and NK cells that plays crucial roles in antimicrobial, antiviral, and antitumor responses by activating effector immune cells and enhancing antigen presentation. Primarily signals through the JAK-STAT pathway after interaction with its receptor IFNGR1 to affect gene regulation. Upon IFNG binding, IFNGR1 intracellular domain opens out to allow association of downstream signaling components JAK2, JAK1 and STAT1, leading to STAT1 activation, nuclear translocation and transcription of IFNG-regulated genes. Many of the induced genes are transcription factors such as IRF1 that are able to further drive regulation of a next wave of transcription. Plays a role in class I antigen presentation pathway by inducing a replacement of catalytic proteasome subunits with immunoproteasome subunits. In turn, increases the quantity, quality, and repertoire of peptides for class I MHC loading. Increases the efficiency of peptide generation also by inducing the expression of activator PA28 that associates with the proteasome and alters its proteolytic cleavage preference. Up-regulates as well MHC II complexes on the cell surface by promoting expression of several key molecules such as cathepsins B/CTSB, H/CTSH, and L/CTSL. Participates in the regulation of hematopoietic stem cells during development and under homeostatic conditions by affecting their development, quiescence, and differentiation. This is Interferon gamma (IFNG) from Saimiri sciureus (Common squirrel monkey).